The sequence spans 291 residues: ATP synthase gamma chain (291 aa).

This sequence belongs to the ATPase gamma chain family. As to quaternary structure, F-type ATPases have 2 components, CF(1) - the catalytic core - and CF(0) - the membrane proton channel. CF(1) has five subunits: alpha(3), beta(3), gamma(1), delta(1), epsilon(1). CF(0) has three main subunits: a, b and c.

It localises to the cell inner membrane. Its function is as follows. Produces ATP from ADP in the presence of a proton gradient across the membrane. The gamma chain is believed to be important in regulating ATPase activity and the flow of protons through the CF(0) complex. The sequence is that of ATP synthase gamma chain from Chlorobium phaeobacteroides (strain DSM 266 / SMG 266 / 2430).